Here is a 2890-residue protein sequence, read N- to C-terminus: Bifunctional DNA-directed RNA polymerase subunit beta-beta' (2890 aa).

The DNA-directed RNA polymerase subunit beta stretch occupies residues 1–1377 (MSKKIPLKNR…DINIFGDDVD (1377 aa)). A DNA-directed RNA polymerase subunit beta' region spans residues 1384 to 2890 (PIVIKEDDRP…LRTLEDGPKF (1507 aa)). Cys1449, Cys1451, Cys1465, and Cys1468 together coordinate Zn(2+). Mg(2+) is bound by residues Asp1849, Asp1851, and Asp1853. Zn(2+)-binding residues include Cys2179, Cys2253, Cys2260, and Cys2263.

The protein in the N-terminal section; belongs to the RNA polymerase beta chain family. In the C-terminal section; belongs to the RNA polymerase beta' chain family. The RNAP catalytic core consists of 2 alpha, 1 beta/beta' and 1 omega subunit. When a sigma factor is associated with the core the holoenzyme is formed, which can initiate transcription. Mg(2+) is required as a cofactor. Zn(2+) serves as cofactor.

It catalyses the reaction RNA(n) + a ribonucleoside 5'-triphosphate = RNA(n+1) + diphosphate. DNA-dependent RNA polymerase catalyzes the transcription of DNA into RNA using the four ribonucleoside triphosphates as substrates. The sequence is that of Bifunctional DNA-directed RNA polymerase subunit beta-beta' (rpoBC) from Helicobacter pylori (strain HPAG1).